A 322-amino-acid chain; its full sequence is Olfactory receptor 5P2 (322 aa).

Residues 1-28 (MNSLKDGNHTALTGFILLGLTDDPILRV) are Extracellular-facing. N-linked (GlcNAc...) asparagine glycosylation occurs at Asn-8. The helical transmembrane segment at 29–42 (ILFMIILSGNLSII) threads the bilayer. Topologically, residues 43–50 (ILIRISSQ) are cytoplasmic. A helical membrane pass occupies residues 51-71 (LHHPMYFFLSHLAFADMAYSS). The Extracellular segment spans residues 72–95 (SVTPNMLVNFLVERNTVSYLGCAI). A disulfide bridge connects residues Cys-93 and Cys-185. The chain crosses the membrane as a helical span at residues 96–116 (QLGSAAFFATVECVLLAAMAY). At 117–135 (DRFVAICSPLLYSTKMSTQ) the chain is on the cytoplasmic side. Residues 136-156 (VSVQLLLVVYIAGFLIAVSYT) form a helical membrane-spanning segment. Over 157–192 (TSFYFLLFCGPNQVNHFFCDFAPLLELSCSDISVST) the chain is Extracellular. A helical membrane pass occupies residues 193–213 (VVLSFSSGSIIVVTVCVIAVC). At 214–233 (YIYILITILKMRSTEGHHKA) the chain is on the cytoplasmic side. The chain crosses the membrane as a helical span at residues 234-254 (FSTCTSHLTVVTLFYGTITFI). The Extracellular segment spans residues 255–267 (YVMPNFSYSTDQN). The N-linked (GlcNAc...) asparagine glycan is linked to Asn-259. The helical transmembrane segment at 268-288 (KVVSVLYTVVIPMLNPLIYSL) threads the bilayer. The Cytoplasmic segment spans residues 289–322 (RNKEIKGALKRELVRKILSHDACYFSRTSNNDIT).

The protein belongs to the G-protein coupled receptor 1 family. In terms of tissue distribution, expressed in the tongue.

It localises to the cell membrane. Functionally, odorant receptor (Potential). May be involved in taste perception. In Homo sapiens (Human), this protein is Olfactory receptor 5P2 (OR5P2).